The following is a 354-amino-acid chain: Uroporphyrinogen decarboxylase (354 aa).

Substrate-binding positions include 27 to 31 (RQAGR), aspartate 77, tyrosine 154, threonine 209, and histidine 327.

The protein belongs to the uroporphyrinogen decarboxylase family. Homodimer.

It is found in the cytoplasm. The enzyme catalyses uroporphyrinogen III + 4 H(+) = coproporphyrinogen III + 4 CO2. It participates in porphyrin-containing compound metabolism; protoporphyrin-IX biosynthesis; coproporphyrinogen-III from 5-aminolevulinate: step 4/4. Functionally, catalyzes the decarboxylation of four acetate groups of uroporphyrinogen-III to yield coproporphyrinogen-III. In Shigella flexneri serotype 5b (strain 8401), this protein is Uroporphyrinogen decarboxylase.